The primary structure comprises 313 residues: 4-hydroxy-3-methylbut-2-enyl diphosphate reductase (313 aa).

Residue C12 coordinates [4Fe-4S] cluster. The (2E)-4-hydroxy-3-methylbut-2-enyl diphosphate site is built by H41 and H74. Positions 41 and 74 each coordinate dimethylallyl diphosphate. Isopentenyl diphosphate-binding residues include H41 and H74. Position 96 (C96) interacts with [4Fe-4S] cluster. H124 contributes to the (2E)-4-hydroxy-3-methylbut-2-enyl diphosphate binding site. Residue H124 participates in dimethylallyl diphosphate binding. H124 is an isopentenyl diphosphate binding site. The active-site Proton donor is the E126. A (2E)-4-hydroxy-3-methylbut-2-enyl diphosphate-binding site is contributed by T167. Position 197 (C197) interacts with [4Fe-4S] cluster. Residues S225, S226, N227, and S269 each contribute to the (2E)-4-hydroxy-3-methylbut-2-enyl diphosphate site. The dimethylallyl diphosphate site is built by S225, S226, N227, and S269. Isopentenyl diphosphate-binding residues include S225, S226, N227, and S269.

This sequence belongs to the IspH family. It depends on [4Fe-4S] cluster as a cofactor.

It catalyses the reaction isopentenyl diphosphate + 2 oxidized [2Fe-2S]-[ferredoxin] + H2O = (2E)-4-hydroxy-3-methylbut-2-enyl diphosphate + 2 reduced [2Fe-2S]-[ferredoxin] + 2 H(+). The enzyme catalyses dimethylallyl diphosphate + 2 oxidized [2Fe-2S]-[ferredoxin] + H2O = (2E)-4-hydroxy-3-methylbut-2-enyl diphosphate + 2 reduced [2Fe-2S]-[ferredoxin] + 2 H(+). It functions in the pathway isoprenoid biosynthesis; dimethylallyl diphosphate biosynthesis; dimethylallyl diphosphate from (2E)-4-hydroxy-3-methylbutenyl diphosphate: step 1/1. Its pathway is isoprenoid biosynthesis; isopentenyl diphosphate biosynthesis via DXP pathway; isopentenyl diphosphate from 1-deoxy-D-xylulose 5-phosphate: step 6/6. Its function is as follows. Catalyzes the conversion of 1-hydroxy-2-methyl-2-(E)-butenyl 4-diphosphate (HMBPP) into a mixture of isopentenyl diphosphate (IPP) and dimethylallyl diphosphate (DMAPP). Acts in the terminal step of the DOXP/MEP pathway for isoprenoid precursor biosynthesis. The sequence is that of 4-hydroxy-3-methylbut-2-enyl diphosphate reductase from Photobacterium profundum (strain SS9).